We begin with the raw amino-acid sequence, 219 residues long: Ribose-5-phosphate isomerase A (219 aa).

Substrate contacts are provided by residues 28–31 (TGST), 81–84 (DGAD), and 94–97 (KGGG). Glutamate 103 acts as the Proton acceptor in catalysis. Lysine 121 contacts substrate.

Belongs to the ribose 5-phosphate isomerase family. As to quaternary structure, homodimer.

The catalysed reaction is aldehydo-D-ribose 5-phosphate = D-ribulose 5-phosphate. The protein operates within carbohydrate degradation; pentose phosphate pathway; D-ribose 5-phosphate from D-ribulose 5-phosphate (non-oxidative stage): step 1/1. Catalyzes the reversible conversion of ribose-5-phosphate to ribulose 5-phosphate. The chain is Ribose-5-phosphate isomerase A from Shewanella oneidensis (strain ATCC 700550 / JCM 31522 / CIP 106686 / LMG 19005 / NCIMB 14063 / MR-1).